The sequence spans 545 residues: Vicilin Pis v 3.0101 (545 aa).

A signal peptide spans 1-25 (MGSRTKFCLTLFLVSVLILCAGLAL). Disordered regions lie at residues 62 to 93 (KEKK…HEPG) and 129 to 154 (REHS…DENP). Residues 82–93 (GRGDEFSTHEPG) show a composition bias toward basic and acidic residues. Residues 136 to 153 (DEEEEEEGDEEQEEEDEN) show a composition bias toward acidic residues. The 164-residue stretch at 354-517 (TFNLFKKDPS…LAFKTKGEEV (164 aa)) folds into the Cupin type-1 2 domain.

This sequence belongs to the 7S seed storage protein family. Expressed in seed.

Functionally, seed storage protein. The chain is Vicilin Pis v 3.0101 from Pistacia vera (Pistachio).